Consider the following 335-residue polypeptide: Glycerol-3-phosphate dehydrogenase [NAD(P)+] (335 aa).

Ser15, Tyr16, His36, and Lys110 together coordinate NADPH. Sn-glycerol 3-phosphate-binding residues include Lys110, Gly139, and Thr141. Ala143 provides a ligand contact to NADPH. Lys195, Asp248, Ser258, Arg259, and Asn260 together coordinate sn-glycerol 3-phosphate. The active-site Proton acceptor is the Lys195. An NADPH-binding site is contributed by Arg259. Positions 283 and 285 each coordinate NADPH.

It belongs to the NAD-dependent glycerol-3-phosphate dehydrogenase family.

The protein localises to the cytoplasm. It carries out the reaction sn-glycerol 3-phosphate + NAD(+) = dihydroxyacetone phosphate + NADH + H(+). The enzyme catalyses sn-glycerol 3-phosphate + NADP(+) = dihydroxyacetone phosphate + NADPH + H(+). Its pathway is membrane lipid metabolism; glycerophospholipid metabolism. Its function is as follows. Catalyzes the reduction of the glycolytic intermediate dihydroxyacetone phosphate (DHAP) to sn-glycerol 3-phosphate (G3P), the key precursor for phospholipid synthesis. This Haemophilus influenzae (strain 86-028NP) protein is Glycerol-3-phosphate dehydrogenase [NAD(P)+].